Here is a 329-residue protein sequence, read N- to C-terminus: DNA-directed RNA polymerase subunit alpha (329 aa).

The alpha N-terminal domain (alpha-NTD) stretch occupies residues 1–235; sequence MQGSVTEFLK…EQLDAFVDLR (235 aa). The alpha C-terminal domain (alpha-CTD) stretch occupies residues 249-329; the sequence is FDPILLRPVD…NWPPASIAED (81 aa).

This sequence belongs to the RNA polymerase alpha chain family. Homodimer. The RNAP catalytic core consists of 2 alpha, 1 beta, 1 beta' and 1 omega subunit. When a sigma factor is associated with the core the holoenzyme is formed, which can initiate transcription.

It catalyses the reaction RNA(n) + a ribonucleoside 5'-triphosphate = RNA(n+1) + diphosphate. DNA-dependent RNA polymerase catalyzes the transcription of DNA into RNA using the four ribonucleoside triphosphates as substrates. The chain is DNA-directed RNA polymerase subunit alpha from Actinobacillus succinogenes (strain ATCC 55618 / DSM 22257 / CCUG 43843 / 130Z).